A 281-amino-acid polypeptide reads, in one-letter code: Ribosomal protein L11 methyltransferase (281 aa).

The S-adenosyl-L-methionine site is built by T133, G154, D175, and N216.

It belongs to the methyltransferase superfamily. PrmA family.

Its subcellular location is the cytoplasm. It catalyses the reaction L-lysyl-[protein] + 3 S-adenosyl-L-methionine = N(6),N(6),N(6)-trimethyl-L-lysyl-[protein] + 3 S-adenosyl-L-homocysteine + 3 H(+). In terms of biological role, methylates ribosomal protein L11. The polypeptide is Ribosomal protein L11 methyltransferase (Campylobacter jejuni subsp. jejuni serotype O:6 (strain 81116 / NCTC 11828)).